The chain runs to 546 residues: Mercuric reductase (546 aa).

The HMA domain occupies 2 to 66; it reads NKFKVNISGM…AIDEANYQAG (65 aa). Residues Cys-13 and Cys-16 each contribute to the a metal cation site. Residues Ala-96, Gly-116, and Thr-121 each coordinate FAD. Cysteines 122 and 127 form a disulfide. Residues Lys-131 and Ala-195 each contribute to the FAD site. Residues 256–263 and Gly-346 each bind NAD(+); that span reads GSGYIGME. Positions 387 and 395 each coordinate FAD. Hg(2+)-binding residues include Cys-543 and Cys-544.

The protein belongs to the class-I pyridine nucleotide-disulfide oxidoreductase family. As to quaternary structure, homodimer. Requires FAD as cofactor.

The catalysed reaction is Hg + NADP(+) + H(+) = Hg(2+) + NADPH. Uses NADPH as the preferred electron donor, but shows slight activity with NADH as well. Inhibited by Cu(2+), Cd(2+), Zn(2+) and Co(2+), with Cu(2+) showing the strongest inhibition. Enzyme activity is enhanced by b-mercaptoethanol and NaCl up to concentrations of 500 uM and 100 mM respectively, followed by inhibition at higher concentrations. In terms of biological role, resistance to Hg(2+) in bacteria appears to be governed by a specialized system which includes mercuric reductase. MerA protein is responsible for volatilizing mercury as Hg(0). Catalyzes reduction of Hg(2+) to elemental Hg, which is volatile and can diffuse out of cells passively. Plays a pivotal role in mercury resistance and cell protection. The chain is Mercuric reductase from Lysinibacillus sphaericus (Bacillus sphaericus).